The chain runs to 265 residues: MNVSWALLAVVLVLTVATYECRPRGRILGGQDSKAEVRPYMASIQQNGIHQCGGVLIADKWVLSAAHCATNSSNSSLNVMLGAISLSKPEKYKIVVKVLREIPHPLYNSTIKHHDLLLLELSEKVTLSPAVNPLPFQNENIDISAGKRCLVAGWGQMRLTGKKPDTLQELWVPLISRDVCNRRNYYDNEITANMICAGESRKDSCEGDSGGPLVCDGIAVAIVQGGFRKCGNPTKPGIYTLIEPYKSWIMESMYNATLQSNPSPL.

Positions 1–21 (MNVSWALLAVVLVLTVATYEC) are cleaved as a signal peptide. The N-linked (GlcNAc...) asparagine glycan is linked to asparagine 2. Positions 22-26 (RPRGR) are cleaved as a propeptide — activation peptide. The Peptidase S1 domain occupies 27-254 (ILGGQDSKAE…YKSWIMESMY (228 aa)). Cysteines 52 and 68 form a disulfide. The active-site Charge relay system is histidine 67. 3 N-linked (GlcNAc...) asparagine glycosylation sites follow: asparagine 71, asparagine 74, and asparagine 108. Aspartate 115 serves as the catalytic Charge relay system. 3 disulfide bridges follow: cysteine 149–cysteine 215, cysteine 180–cysteine 196, and cysteine 205–cysteine 230. The active-site Charge relay system is the serine 209. Asparagine 255 carries an N-linked (GlcNAc...) asparagine glycan.

Belongs to the peptidase S1 family.

The protein localises to the secreted. Probable serine protease. This is Serine protease ami from Xenopus tropicalis (Western clawed frog).